A 98-amino-acid polypeptide reads, in one-letter code: HssA/B-like protein 36 (98 aa).

Residues 1–29 (MTLFSSISSISNPMTSSKSSISSFGSGTS) form a disordered region.

This sequence belongs to the hssA/B family.

This Dictyostelium discoideum (Social amoeba) protein is HssA/B-like protein 36 (hssl36).